Here is a 192-residue protein sequence, read N- to C-terminus: Putative ripening-related protein 2 (192 aa).

The N-terminal stretch at 1–26 is a signal peptide; that stretch reads MATTNCLLALAIAGLVLVSLPGLSRG.

Belongs to the kiwellin family.

Its subcellular location is the secreted. In Oryza sativa subsp. japonica (Rice), this protein is Putative ripening-related protein 2.